The following is a 289-amino-acid chain: Pantothenate synthetase (289 aa).

Residue 28–35 (MGCLHEGH) participates in ATP binding. The active-site Proton donor is the His-35. (R)-pantoate is bound at residue Gln-59. Beta-alanine is bound at residue Gln-59. ATP is bound at residue 147 to 150 (GLKD). Residue Gln-153 participates in (R)-pantoate binding. ATP contacts are provided by residues Val-176 and 184-187 (MSSR).

Belongs to the pantothenate synthetase family. As to quaternary structure, homodimer.

It localises to the cytoplasm. It catalyses the reaction (R)-pantoate + beta-alanine + ATP = (R)-pantothenate + AMP + diphosphate + H(+). Its pathway is cofactor biosynthesis; (R)-pantothenate biosynthesis; (R)-pantothenate from (R)-pantoate and beta-alanine: step 1/1. Functionally, catalyzes the condensation of pantoate with beta-alanine in an ATP-dependent reaction via a pantoyl-adenylate intermediate. The polypeptide is Pantothenate synthetase (Magnetococcus marinus (strain ATCC BAA-1437 / JCM 17883 / MC-1)).